Reading from the N-terminus, the 247-residue chain is MIVLTQSGTLLFDQRFKLSKFLFVVIATGFPLLLQQASLIYGYNHEQIYRICRSFLHVLPLLNCKRGRISTSGLQLPRHLHYECLEWGLLCGTHPAIQIVGLTIVIKLDDPTTAAAYRSELLRVSSSSYIQNAAGLSNGWGHDMEAFVRNAICLLELRERSIPQSGLRDLMGNYQHLVRSLLDACKVDHFVPLDFQHRSLMLNFARLYNQLDLQGRAKSFRALTGFPVYVPSEDYLEGSFLQKELQE.

An F-box-like domain is found at 76–95 (LPRHLHYECLEWGLLCGTHP).

Belongs to the polerovirus P0 protein family.

Functionally, suppressor of RNA-mediated gene silencing, also known as post-transcriptional gene silencing (PTGS), a mechanism of plant viral defense that limits the accumulation of viral RNAs. The P0 protein suppresses local PTGS using its F-box-like domain to mediate destabilization and degradation of the AGO1 protein, although not via an interaction with host SKP1A. Participates, together with the proteins P1 and P7, in the inhibition of the induction of aphid-induced host phytohormones. This could play a role in the attraction to the infected plants by aphids. This chain is Suppressor of silencing P0, found in Potato leafroll virus (strain Potato/Scotland/strain 1/1984) (PLrV).